The chain runs to 392 residues: MTLLNSYFGSFGGMYVPQILMPALYQLESEFVLSLKNLQFKKKLANLLKNYAGRPTPLTLCRNLTKGTNTRIYLKREDLLHGGAHKTNQVLGQALLAKQMKKKEIIAETGAGQHGVAAALSCALLNLKCRIYMGIKDIERQKQNVFRMKLMGAQVIPVKSGNGTLKDACNEALRDWSENYINAHYMLGTAAGPHPYPTIVKQFQSVIGKETKQQIFEKEHCLPNSVIACVGGGSNAIGIFSSFIEDTSVNLIGVEPGGIGIHTEKHGASLICGETGIFFGMKSKVMQTHEGQIKESWSISAGLDFPAVGPEHAWLDSIKRVTYVSITDSEAVHAFQHLSKLEGIIPALESSHALAYAIKLMNNYPNKNQTLIVNISGRGDKDLKTVEKFLNK.

Lys-86 is modified (N6-(pyridoxal phosphate)lysine).

Belongs to the TrpB family. Tetramer of two alpha and two beta chains. Pyridoxal 5'-phosphate serves as cofactor.

The catalysed reaction is (1S,2R)-1-C-(indol-3-yl)glycerol 3-phosphate + L-serine = D-glyceraldehyde 3-phosphate + L-tryptophan + H2O. The protein operates within amino-acid biosynthesis; L-tryptophan biosynthesis; L-tryptophan from chorismate: step 5/5. In terms of biological role, the beta subunit is responsible for the synthesis of L-tryptophan from indole and L-serine. The polypeptide is Tryptophan synthase beta chain (trpB) (Buchnera aphidicola subsp. Schlechtendalia chinensis).